The chain runs to 215 residues: Pyrrolidone-carboxylate peptidase (215 aa).

Residues glutamate 81, cysteine 144, and histidine 168 contribute to the active site.

Belongs to the peptidase C15 family. As to quaternary structure, homotetramer.

The protein resides in the cytoplasm. The catalysed reaction is Release of an N-terminal pyroglutamyl group from a polypeptide, the second amino acid generally not being Pro.. Removes 5-oxoproline from various penultimate amino acid residues except L-proline. This is Pyrrolidone-carboxylate peptidase (pcp) from Bacillus amyloliquefaciens (Bacillus velezensis).